A 363-amino-acid polypeptide reads, in one-letter code: NAD(P)H-quinone oxidoreductase subunit 1, chloroplastic (363 aa).

Helical transmembrane passes span 27 to 47 (IWLF…VLVI), 98 to 118 (FSIG…VIPF), 127 to 147 (LSIG…GLLM), 248 to 268 (YSGI…LVSS), 300 to 320 (VFGT…FLFI), and 336 to 356 (LLNL…LLTT).

This sequence belongs to the complex I subunit 1 family. NDH is composed of at least 16 different subunits, 5 of which are encoded in the nucleus.

The protein localises to the plastid. It localises to the chloroplast thylakoid membrane. It catalyses the reaction a plastoquinone + NADH + (n+1) H(+)(in) = a plastoquinol + NAD(+) + n H(+)(out). The enzyme catalyses a plastoquinone + NADPH + (n+1) H(+)(in) = a plastoquinol + NADP(+) + n H(+)(out). Its function is as follows. NDH shuttles electrons from NAD(P)H:plastoquinone, via FMN and iron-sulfur (Fe-S) centers, to quinones in the photosynthetic chain and possibly in a chloroplast respiratory chain. The immediate electron acceptor for the enzyme in this species is believed to be plastoquinone. Couples the redox reaction to proton translocation, and thus conserves the redox energy in a proton gradient. This chain is NAD(P)H-quinone oxidoreductase subunit 1, chloroplastic, found in Amborella trichopoda.